The chain runs to 853 residues: Cytochrome P450 monooxygenase mpaDE' (853 aa).

The Lumenal portion of the chain corresponds to 1 to 6; it reads MESLSL. The helical transmembrane segment at 7 to 29 threads the bilayer; sequence TWITAIAVVLYLVQRYVRSYWRL. At 30–853 the chain is on the cytoplasmic side; the sequence is KDIPGPVLAK…DIENAIEGQK (824 aa). C449 provides a ligand contact to heme.

This sequence belongs to the cytochrome P450 family. Heme is required as a cofactor.

It localises to the endoplasmic reticulum membrane. The enzyme catalyses 5-methylorsellinate + reduced [NADPH--hemoprotein reductase] + O2 = 4,6-dihydroxy-2-(hydroxymethyl)-3-methylbenzoate + oxidized [NADPH--hemoprotein reductase] + H2O + H(+). The catalysed reaction is 4,6-dihydroxy-2-(hydroxymethyl)-3-methylbenzoate + H(+) = 5,7-dihydroxy-4-methylphthalide + H2O. The protein operates within secondary metabolite biosynthesis; terpenoid biosynthesis. Functionally, cytochrome P450 monooxygenase; part of the gene cluster that mediates the biosynthesis of mycophenolic acid (MPA), the first isolated antibiotic natural product in the world obtained from a culture of Penicillium brevicompactum in 1893. MpaDE' is an endoplasmic reticulum-bound enzyme that catalyzes the conversion of 5-methylorsellinic acid (5MOA) into the phthalide compound 5,7-dihydroxy-4,6-dimethylphthalide (DHMP). MpaDE' first catalyzes hydroxylation of 5-MOA to 4,6-dihydroxy-2-(hydroxymethyl)-3-methylbenzoic acid (DHMB), and then acts as a lactone synthase that catalyzes the ring closure to convert DHMB into DHMP. The first step of the pathway is the synthesis of 5-methylorsellinic acid (5MOA) by the cytosolic polyketide synthase mpaC. 5MOA is then converted to the phthalide compound 5,7-dihydroxy-4,6-dimethylphthalide (DHMP) by the endoplasmic reticulum-bound cytochrome P450 monooxygenase mpaDE. MpaDE first catalyzes hydroxylation of 5-MOA to 4,6-dihydroxy-2-(hydroxymethyl)-3-methylbenzoic acid (DHMB). MpaDE then acts as a lactone synthase that catalyzes the ring closure to convert DHMB into DHMP. The next step is the prenylation of DHMP by the Golgi apparatus-associated prenyltransferase mpaA to yield farnesyl-DHMP (FDHMP). The ER-bound oxygenase mpaB then mediates the oxidative cleavage the C19-C20 double bond in FDHMP to yield FDHMP-3C via a mycophenolic aldehyde intermediate. The O-methyltransferase mpaG catalyzes the methylation of FDHMP-3C to yield MFDHMP-3C. After the cytosolic methylation of FDHMP-3C, MFDHMP-3C enters into peroxisomes probably via free diffusion due to its low molecular weight. Upon a peroxisomal CoA ligation reaction, catalyzed by a beta-oxidation component enzyme acyl-CoA ligase ACL891, MFDHMP-3C-CoA would then be restricted to peroxisomes for the following beta-oxidation pathway steps. The peroxisomal beta-oxidation machinery than converts MFDHMP-3C-CoA into MPA_CoA, via a beta-oxidation chain-shortening process. Finally mpaH acts as a peroxisomal acyl-CoA hydrolase with high substrate specificity toward MPA-CoA to release the final product MPA. The polypeptide is Cytochrome P450 monooxygenase mpaDE' (Penicillium brevicompactum).